The sequence spans 320 residues: HPr kinase/phosphorylase (320 aa).

Catalysis depends on residues histidine 141 and lysine 162. 156 to 163 (GHSGLGKS) contributes to the ATP binding site. Serine 163 contributes to the Mg(2+) binding site. Aspartate 180 (proton acceptor; for phosphorylation activity. Proton donor; for dephosphorylation activity) is an active-site residue. The segment at 204-213 (LEVRGLGILN) is important for the catalytic mechanism of both phosphorylation and dephosphorylation. Glutamate 205 is a Mg(2+) binding site. Arginine 248 is a catalytic residue. Residues 269–274 (PVAVGR) are important for the catalytic mechanism of dephosphorylation.

This sequence belongs to the HPrK/P family. In terms of assembly, homohexamer. Mg(2+) is required as a cofactor.

The catalysed reaction is [HPr protein]-L-serine + ATP = [HPr protein]-O-phospho-L-serine + ADP + H(+). It carries out the reaction [HPr protein]-O-phospho-L-serine + phosphate + H(+) = [HPr protein]-L-serine + diphosphate. Its function is as follows. Catalyzes the ATP- as well as the pyrophosphate-dependent phosphorylation of a specific serine residue in HPr, a phosphocarrier protein of the phosphoenolpyruvate-dependent sugar phosphotransferase system (PTS). HprK/P also catalyzes the pyrophosphate-producing, inorganic phosphate-dependent dephosphorylation (phosphorolysis) of seryl-phosphorylated HPr (P-Ser-HPr). This Neisseria gonorrhoeae (strain ATCC 700825 / FA 1090) protein is HPr kinase/phosphorylase.